Reading from the N-terminus, the 584-residue chain is Optineurin (584 aa).

Positions 1–32 (MSHQPLSCLTEKGDSPCETPGNGPSNMVHPSL) are disordered. The stretch at 38-180 (EELLQQMKEL…VSELQLKLNS (143 aa)) forms a coiled coil. Positions 58-219 (MKLNNQAMKG…TPTRTDPISL (162 aa)) are interaction with Rab8. An LIR motif is present at residues 186–191 (DSFVEI). S187 is subject to Phosphoserine. 2 coiled-coil regions span residues 243-278 (CLRE…HSST) and 307-511 (IQVT…DIEE). The span at 267-295 (DFEKKANGHSSTEKQTARRADREKEDKGQ) shows a compositional bias: basic and acidic residues. Positions 267-302 (DFEKKANGHSSTEKQTARRADREKEDKGQESVGSEV) are disordered. S345 carries the phosphoserine modification. The interval 414–584 (TKQQAEKVDK…LQIHVMDCII (171 aa)) is interaction with HD. Residues 415–524 (KQQAEKVDKM…RQSLMEMQCR (110 aa)) form an interaction with MYO6 region. Positions 477–482 (DFHAER) match the UBAN motif. Residue S530 is modified to Phosphoserine. The CCHC NOA-type zinc finger occupies 554–584 (PRSIPIHSCPKCGEVLPDIDTLQIHVMDCII). 4 residues coordinate Zn(2+): C562, C565, H578, and C582.

In terms of assembly, self-associates. Interacts with HD, GTF3A, TRAF3, TBK1 and MYO6. Interacts (via UBAN) with ubiquitinated TFRC. Interacts with active GTP-bound Rab8 (RAB8A and/or RAB8B). Interacts with TBC1D17. Binds to linear ubiquitin chains. Interacts with LC3 family members MAP1LC3A, MAP1LC3B, GABARAP, GABARAPL1 and GABARAPL2; OPTN phosphorylation increases the association (at least with MAP1LC3B). Interacts with RAB12; the interaction may be indirect. Interacts with TBK1; this interaction leads to the Golgi localization of TBK1 and its subsequent activation. Interacts with palmitoyltransferase ZDHHC17/HIP14; the interaction does not lead to palmitoylation of OPTN. Interacts with CYLD. Interacts with TOM1; the interaction is indirect and is mediated by MYO6, which acts as a bridge between TOM1 and OPTN. Interacts with USP12; the interaction is independent of USP12 deubiquitinase activity and may be involved in regulation of autophagic flux. In terms of processing, phosphorylated by TBK1, leading to restrict bacterial proliferation in case of infection. In terms of tissue distribution, in eye, it is expressed in anterior segment, retina, and optic nerve blood vessels (at protein level). Highly expressed in adult liver, heart and testis.

It is found in the cytoplasm. Its subcellular location is the perinuclear region. The protein localises to the golgi apparatus. It localises to the trans-Golgi network. The protein resides in the cytoplasmic vesicle. It is found in the autophagosome. Its subcellular location is the recycling endosome. Functionally, plays an important role in the maintenance of the Golgi complex, in membrane trafficking, in exocytosis, through its interaction with myosin VI and Rab8. Links myosin VI to the Golgi complex and plays an important role in Golgi ribbon formation. Plays a role in the activation of innate immune response during viral infection. Mechanistically, recruits TBK1 at the Golgi apparatus, promoting its trans-phosphorylation after RLR or TLR3 stimulation. In turn, activated TBK1 phosphorylates its downstream partner IRF3 to produce IFN-beta. Plays a neuroprotective role in the eye and optic nerve. May act by regulating membrane trafficking and cellular morphogenesis via a complex that contains Rab8 and huntingtin (HD). Mediates the interaction of Rab8 with the probable GTPase-activating protein TBC1D17 during Rab8-mediated endocytic trafficking, such as that of transferrin receptor (TFRC/TfR); regulates Rab8 recruitment to tubules emanating from the endocytic recycling compartment. Autophagy receptor that interacts directly with both the cargo to become degraded and an autophagy modifier of the MAP1 LC3 family; targets ubiquitin-coated bacteria (xenophagy), such as cytoplasmic Salmonella enterica, and appears to function in the same pathway as SQSTM1 and CALCOCO2/NDP52. In Mus musculus (Mouse), this protein is Optineurin (Optn).